The sequence spans 466 residues: Soluble pyridine nucleotide transhydrogenase (466 aa).

An FAD-binding site is contributed by 36 to 45 (ERYHNVGGGC).

The protein belongs to the class-I pyridine nucleotide-disulfide oxidoreductase family. Requires FAD as cofactor.

It localises to the cytoplasm. It carries out the reaction NAD(+) + NADPH = NADH + NADP(+). Functionally, conversion of NADPH, generated by peripheral catabolic pathways, to NADH, which can enter the respiratory chain for energy generation. The sequence is that of Soluble pyridine nucleotide transhydrogenase from Salmonella paratyphi A (strain ATCC 9150 / SARB42).